We begin with the raw amino-acid sequence, 680 residues long: NADPH--cytochrome P450 reductase (680 aa).

Topologically, residues 1–5 (MALDK) are lumenal. A helical membrane pass occupies residues 6 to 23 (LDLYVIITLVVAIAAYFA). Topologically, residues 24–680 (KNQFLDQQQD…VQNRYQEDVW (657 aa)) are cytoplasmic. Residues 60 to 204 (TLLLFGSQTG…DFLAWKDNVF (145 aa)) enclose the Flavodoxin-like domain. FMN contacts are provided by residues 66–71 (SQTGTA), 117–120 (ATYG), 152–161 (LGNSTYEFFN), and Asp187. The FAD-binding FR-type domain maps to 264–509 (THPFLARIVK…NGPRGKFSKF (246 aa)). Residue Arg283 participates in NADP(+) binding. Residues 439–442 (RYYS), 457–459 (TAV), and 473–476 (GVVT) each bind FAD. NADP(+)-binding positions include Thr537, 599–600 (SR), 606–610 (KVYVQ), and Asp642. Trp680 is a binding site for FAD.

The protein belongs to the NADPH--cytochrome P450 reductase family. It in the N-terminal section; belongs to the flavodoxin family. In the C-terminal section; belongs to the flavoprotein pyridine nucleotide cytochrome reductase family. FAD serves as cofactor. It depends on FMN as a cofactor.

The protein localises to the endoplasmic reticulum membrane. The protein resides in the mitochondrion outer membrane. It is found in the cell membrane. The catalysed reaction is 2 oxidized [cytochrome P450] + NADPH = 2 reduced [cytochrome P450] + NADP(+) + H(+). Functionally, this enzyme is required for electron transfer from NADP to cytochrome P450 in microsomes. It can also provide electron transfer to heme oxygenase and cytochrome B5. Involved in ergosterol biosynthesis. This is NADPH--cytochrome P450 reductase from Candida tropicalis (Yeast).